The following is an 89-amino-acid chain: Small ribosomal subunit protein uS15 (89 aa).

This sequence belongs to the universal ribosomal protein uS15 family. Part of the 30S ribosomal subunit. Forms a bridge to the 50S subunit in the 70S ribosome, contacting the 23S rRNA.

Its function is as follows. One of the primary rRNA binding proteins, it binds directly to 16S rRNA where it helps nucleate assembly of the platform of the 30S subunit by binding and bridging several RNA helices of the 16S rRNA. In terms of biological role, forms an intersubunit bridge (bridge B4) with the 23S rRNA of the 50S subunit in the ribosome. The sequence is that of Small ribosomal subunit protein uS15 from Baumannia cicadellinicola subsp. Homalodisca coagulata.